A 260-amino-acid polypeptide reads, in one-letter code: GTP cyclohydrolase FolE2 (260 aa).

This sequence belongs to the GTP cyclohydrolase IV family.

The enzyme catalyses GTP + H2O = 7,8-dihydroneopterin 3'-triphosphate + formate + H(+). It participates in cofactor biosynthesis; 7,8-dihydroneopterin triphosphate biosynthesis; 7,8-dihydroneopterin triphosphate from GTP: step 1/1. Converts GTP to 7,8-dihydroneopterin triphosphate. In Desulfovibrio desulfuricans (strain ATCC 27774 / DSM 6949 / MB), this protein is GTP cyclohydrolase FolE2.